Reading from the N-terminus, the 309-residue chain is D-alanine--D-alanine ligase (309 aa).

Residues Lys104 to Ala301 enclose the ATP-grasp domain. Val130 to Thr185 serves as a coordination point for ATP. Mg(2+)-binding residues include Asp255, Glu268, and Asn270.

It belongs to the D-alanine--D-alanine ligase family. It depends on Mg(2+) as a cofactor. Mn(2+) serves as cofactor.

It localises to the cytoplasm. The catalysed reaction is 2 D-alanine + ATP = D-alanyl-D-alanine + ADP + phosphate + H(+). Its pathway is cell wall biogenesis; peptidoglycan biosynthesis. Functionally, cell wall formation. This is D-alanine--D-alanine ligase from Acinetobacter baylyi (strain ATCC 33305 / BD413 / ADP1).